Here is a 154-residue protein sequence, read N- to C-terminus: Protein X (154 aa).

The segment at 68 to 117 is mitochondrial targeting sequence; sequence PCALRFTSARRMETTVNAHQVLPKVLHKRTLGLSAMSTTDLEAYFKDCLF.

It belongs to the orthohepadnavirus protein X family. As to quaternary structure, may form homodimer. May interact with host CEBPA, CFLAR, CREB1, DDB1, E4F1, HBXIP, HSPD1/HSP60, NFKBIA, POLR2E and SMAD4. Interacts with host SMC5-SMC6 complex and induces its degradation. Interacts with host TRPC4AP; leading to prevent ubiquitination of TRPC4AP. Interacts with host PLSCR1; this interaction promotes ubiquitination and degradation of HBx and impairs HBx-mediated cell proliferation. A fraction may be phosphorylated in insect cells and HepG2 cells, a human hepatoblastoma cell line. Phosphorylated in vitro by host protein kinase C or mitogen-activated protein kinase. N-acetylated in insect cells.

It is found in the host cytoplasm. The protein resides in the host nucleus. It localises to the host mitochondrion. Multifunctional protein that plays a role in silencing host antiviral defenses and promoting viral transcription. Does not seem to be essential for HBV infection. May be directly involved in development of cirrhosis and liver cancer (hepatocellular carcinoma). Most of cytosolic activities involve modulation of cytosolic calcium. The effect on apoptosis is controversial depending on the cell types in which the studies have been conducted. May induce apoptosis by localizing in mitochondria and causing loss of mitochondrial membrane potential. May also modulate apoptosis by binding host CFLAR, a key regulator of the death-inducing signaling complex (DISC). Promotes viral transcription by using the host E3 ubiquitin ligase DDB1 to target the SMC5-SMC6 complex to proteasomal degradation. This host complex would otherwise bind to viral episomal DNA, and prevents its transcription. Moderately stimulates transcription of many different viral and cellular transcription elements. Promoters and enhancers stimulated by HBx contain DNA binding sites for NF-kappa-B, AP-1, AP-2, c-EBP, ATF/CREB, or the calcium-activated factor NF-AT. The protein is Protein X of Hepatitis B virus genotype C subtype adr (strain Japan/adr4/1983) (HBV-C).